Reading from the N-terminus, the 483-residue chain is Glutamate--tRNA ligase 1 (483 aa).

The short motif at 9-19 (PSPTGFLHIGG) is the 'HIGH' region element. The short motif at 238 to 242 (KLSKR) is the 'KMSKS' region element. Lys-241 serves as a coordination point for ATP.

This sequence belongs to the class-I aminoacyl-tRNA synthetase family. Glutamate--tRNA ligase type 1 subfamily. Monomer.

The protein localises to the cytoplasm. It catalyses the reaction tRNA(Glu) + L-glutamate + ATP = L-glutamyl-tRNA(Glu) + AMP + diphosphate. Catalyzes the attachment of glutamate to tRNA(Glu) in a two-step reaction: glutamate is first activated by ATP to form Glu-AMP and then transferred to the acceptor end of tRNA(Glu). The polypeptide is Glutamate--tRNA ligase 1 (Bartonella henselae (strain ATCC 49882 / DSM 28221 / CCUG 30454 / Houston 1) (Rochalimaea henselae)).